Reading from the N-terminus, the 99-residue chain is Integration host factor subunit alpha (99 aa).

The protein belongs to the bacterial histone-like protein family. Heterodimer of an alpha and a beta chain.

Functionally, this protein is one of the two subunits of integration host factor, a specific DNA-binding protein that functions in genetic recombination as well as in transcriptional and translational control. The polypeptide is Integration host factor subunit alpha (ihfA) (Xylella fastidiosa (strain 9a5c)).